A 530-amino-acid polypeptide reads, in one-letter code: Arginine--tRNA ligase (530 aa).

The short motif at 113-123 (ANPTGPLHIGH) is the 'HIGH' region element.

The protein belongs to the class-I aminoacyl-tRNA synthetase family. Monomer.

It localises to the cytoplasm. It catalyses the reaction tRNA(Arg) + L-arginine + ATP = L-arginyl-tRNA(Arg) + AMP + diphosphate. The polypeptide is Arginine--tRNA ligase (Campylobacter jejuni subsp. jejuni serotype O:23/36 (strain 81-176)).